We begin with the raw amino-acid sequence, 131 residues long: M-zodatoxin-Lt8m (131 aa).

Residues 1-20 (MKYFVVALALVAAFACIAES) form the signal peptide. The propeptide occupies 21-60 (KPAESEHELAEVEEENELADLEDAVWLEHLADLSDLEEAR).

Belongs to the cationic peptide 06 (cytoinsectotoxin) family. As to expression, expressed by the venom gland.

The protein resides in the secreted. Functionally, insecticidal, cytolytic and antimicrobial peptide. Forms voltage-dependent, ion-permeable channels in membranes. At high concentration causes cell membrane lysis. The protein is M-zodatoxin-Lt8m (cit 1-13) of Lachesana tarabaevi (Spider).